The sequence spans 140 residues: MTVGARLRSKASSLVGRGPLGRLRRAGDEETDAIVEHLEGEDEDPESQDCEREEDGRRAGTPSARRVHLAALPERYDSLEEPAPGDKPKKRYRRKLKKYGKNVGKAISKGCRYIVIGLQGFAAAYSAPFGVATSVVSFVR.

The tract at residues 1 to 95 (MTVGARLRSK…DKPKKRYRRK (95 aa)) is disordered. Positions 29 to 53 (EETDAIVEHLEGEDEDPESQDCERE) are enriched in acidic residues. The helical transmembrane segment at 118 to 140 (LQGFAAAYSAPFGVATSVVSFVR) threads the bilayer.

The protein resides in the membrane. Functionally, regulates drug efflux through modulation of ABCB1 localization and activity. This is Required for drug-induced death protein 1 from Rattus norvegicus (Rat).